We begin with the raw amino-acid sequence, 666 residues long: Mitogen-activated protein kinase kinase kinase ANP1 (666 aa).

Positions 69–331 (WRKGQLIGRG…ASELLKHPFV (263 aa)) constitute a Protein kinase domain. ATP is bound by residues 75–83 (IGRGAFGTV) and lysine 98. Positions 101–131 (LIAANFASKEKTQAHIQELEEEVKLLKNLSH) form a coiled coil. Glycyl lysine isopeptide (Lys-Gly) (interchain with G-Cter in ubiquitin) cross-links involve residues lysine 109 and lysine 111. Catalysis depends on aspartate 197, which acts as the Proton acceptor. A compositionally biased stretch (basic and acidic residues) spans 452-464 (KFDESPGNGEKES). Disordered regions lie at residues 452–481 (KFDE…DDDE), 536–592 (GFLK…DGVS), and 635–666 (QEIM…SPGK). Residues 538–558 (LKLPPKSRSPSRGPLGGSPSR) are compositionally biased toward low complexity. The span at 560 to 569 (TDATSCSKSP) shows a compositional bias: polar residues. A coiled-coil region spans residues 620-643 (KKWKEELDQELERKRQEIMRQAGL). Over residues 647 to 660 (PRDRGMSRQREKSR) the composition is skewed to basic and acidic residues.

The protein belongs to the protein kinase superfamily. STE Ser/Thr protein kinase family. MAP kinase kinase kinase subfamily. In terms of tissue distribution, expressed in roots, inflorescence stems, flower buds and flowers. Low amount in rosette and cauline leaves.

It carries out the reaction L-seryl-[protein] + ATP = O-phospho-L-seryl-[protein] + ADP + H(+). It catalyses the reaction L-threonyl-[protein] + ATP = O-phospho-L-threonyl-[protein] + ADP + H(+). May be involved in an oxidative stress-mediated signaling cascade that phosphorylates downstream MAP kinases MPK3 and MPK6. May suppress auxin signaling that promotes cell cycle. Functionally redundant to ANP2 and ANP3 in the positive regulation of cytokinesis. In Arabidopsis thaliana (Mouse-ear cress), this protein is Mitogen-activated protein kinase kinase kinase ANP1 (ANP1).